Consider the following 618-residue polypeptide: Delta-like protein 3 (618 aa).

An N-terminal signal peptide occupies residues 1–26 (MVSPRMSGLLSQTVILALIFLPQTRP). At 27 to 492 (AGVFELQIHS…LRPGDPQRYL (466 aa)) the chain is on the extracellular side. Residues 176-215 (ARCEPPAVGTACTRLCRPRSAPSRCGPGLRPCAPLEDECE) form the DSL domain. EGF-like domains lie at 216–249 (APLV…PLCT), 274–310 (GPGP…LRCE), 312–351 (SGVT…SNCE), 353–389 (RVDR…PRCE), 391–427 (DLDD…RDCR), and 429–465 (RADP…ARCE). Intrachain disulfides connect cysteine 220–cysteine 231, cysteine 224–cysteine 237, cysteine 239–cysteine 248, cysteine 278–cysteine 289, cysteine 283–cysteine 298, cysteine 300–cysteine 309, cysteine 316–cysteine 327, cysteine 321–cysteine 339, cysteine 341–cysteine 350, cysteine 357–cysteine 368, cysteine 362–cysteine 377, cysteine 379–cysteine 388, cysteine 395–cysteine 406, cysteine 400–cysteine 415, cysteine 417–cysteine 426, cysteine 433–cysteine 444, cysteine 438–cysteine 453, and cysteine 455–cysteine 464. Residues 493–513 (LPPALGLLVAAGVAGAALLLV) traverse the membrane as a helical segment. At 514–618 (HVRRRGHSQD…PYPSSILSVK (105 aa)) the chain is on the cytoplasmic side. A compositionally biased stretch (polar residues) spans 546-562 (NLRTQEGSGDGPSSSVD). Positions 546 to 566 (NLRTQEGSGDGPSSSVDWNRP) are disordered.

As to quaternary structure, can bind and activate Notch-1 or another Notch receptor. Ubiquitinated by MIB (MIB1 or MIB2), leading to its endocytosis and subsequent degradation.

The protein resides in the membrane. Inhibits primary neurogenesis. May be required to divert neurons along a specific differentiation pathway. Plays a role in the formation of somite boundaries during segmentation of the paraxial mesoderm. The sequence is that of Delta-like protein 3 (DLL3) from Homo sapiens (Human).